Here is a 59-residue protein sequence, read N- to C-terminus: Ribosome modulation factor (59 aa).

This sequence belongs to the ribosome modulation factor family.

The protein resides in the cytoplasm. During stationary phase, converts 70S ribosomes to an inactive dimeric form (100S ribosomes). In Aeromonas veronii (strain B565), this protein is Ribosome modulation factor.